A 152-amino-acid polypeptide reads, in one-letter code: Type-1 angiotensin II receptor-associated protein (152 aa).

Topologically, residues 1-23 (MELPAVNLKVILLGHWLLTTWGC) are extracellular. Residues 24–44 (IVFSGSYAWANFTILALGVWA) form a helical membrane-spanning segment. The Cytoplasmic segment spans residues 45–55 (VAQRDSIDAIS). The chain crosses the membrane as a helical span at residues 56 to 76 (MFLGGLLATIFLDIVHISIFY). Topologically, residues 77-86 (PRAGLTDTGR) are extracellular. A helical membrane pass occupies residues 87–107 (FGAGMAILSLLLKPLSCCFVY). At 108-152 (HMYRQRGGFLGSSQDRSAYQTIDSAEAPANAFAVPEGRGQDARGY) the chain is on the cytoplasmic side. Residues serine 119 and serine 120 each carry the phosphoserine modification. At threonine 128 the chain carries Phosphothreonine. At serine 131 the chain carries Phosphoserine.

As to quaternary structure, interacts with RACK1, and with the carboxy-terminal region of AGTR1.

The protein resides in the endoplasmic reticulum membrane. Its subcellular location is the golgi apparatus membrane. It localises to the cytoplasmic vesicle membrane. In terms of biological role, appears to be a negative regulator of type-1 angiotensin II receptor-mediated signaling by regulating receptor internalization as well as mechanism of receptor desensitization such as phosphorylation. Also induces a decrease in cell proliferation and angiotensin II-stimulated transcriptional activity. The polypeptide is Type-1 angiotensin II receptor-associated protein (AGTRAP) (Pongo abelii (Sumatran orangutan)).